The primary structure comprises 354 residues: Glutamine synthetase (354 aa).

Residues 22-101 (IQAEYVWIDG…VLAETYNNDG (80 aa)) form the GS beta-grasp domain. Residues 108-354 (HRHHAKKVFD…IIAETTILDK (247 aa)) form the GS catalytic domain.

The protein belongs to the glutamine synthetase family. Homooctamer.

It is found in the cytoplasm. It catalyses the reaction L-glutamate + NH4(+) + ATP = L-glutamine + ADP + phosphate + H(+). The protein is Glutamine synthetase (glnA) of Agaricus bisporus (White button mushroom).